The following is a 184-amino-acid chain: UPF0301 protein RHOS4_26140 (184 aa).

The protein belongs to the UPF0301 (AlgH) family.

This Cereibacter sphaeroides (strain ATCC 17023 / DSM 158 / JCM 6121 / CCUG 31486 / LMG 2827 / NBRC 12203 / NCIMB 8253 / ATH 2.4.1.) (Rhodobacter sphaeroides) protein is UPF0301 protein RHOS4_26140.